Here is a 252-residue protein sequence, read N- to C-terminus: Triosephosphate isomerase (252 aa).

Substrate is bound at residue Asn-10–Lys-12. The Electrophile role is filled by His-96. Glu-168 serves as the catalytic Proton acceptor. Residues Gly-174, Ser-214, and Gly-235–Gly-236 each bind substrate.

The protein belongs to the triosephosphate isomerase family. In terms of assembly, homodimer.

The protein resides in the cytoplasm. It carries out the reaction D-glyceraldehyde 3-phosphate = dihydroxyacetone phosphate. It participates in carbohydrate biosynthesis; gluconeogenesis. The protein operates within carbohydrate degradation; glycolysis; D-glyceraldehyde 3-phosphate from glycerone phosphate: step 1/1. Involved in the gluconeogenesis. Catalyzes stereospecifically the conversion of dihydroxyacetone phosphate (DHAP) to D-glyceraldehyde-3-phosphate (G3P). This chain is Triosephosphate isomerase, found in Streptococcus pyogenes serotype M6 (strain ATCC BAA-946 / MGAS10394).